Reading from the N-terminus, the 122-residue chain is Large ribosomal subunit protein bL12 (122 aa).

The protein belongs to the bacterial ribosomal protein bL12 family. Homodimer. Part of the ribosomal stalk of the 50S ribosomal subunit. Forms a multimeric L10(L12)X complex, where L10 forms an elongated spine to which 2 to 4 L12 dimers bind in a sequential fashion. Binds GTP-bound translation factors.

Functionally, forms part of the ribosomal stalk which helps the ribosome interact with GTP-bound translation factors. Is thus essential for accurate translation. This chain is Large ribosomal subunit protein bL12, found in Enterococcus faecalis (strain ATCC 700802 / V583).